A 574-amino-acid chain; its full sequence is Adenine deaminase (574 aa).

This sequence belongs to the metallo-dependent hydrolases superfamily. Adenine deaminase family. Mn(2+) is required as a cofactor.

The enzyme catalyses adenine + H2O + H(+) = hypoxanthine + NH4(+). This is Adenine deaminase from Thermosipho africanus (strain TCF52B).